The following is a 388-amino-acid chain: Chaperone protein DnaJ (388 aa).

The J domain maps to 5 to 69 (DYYDVLGVDK…QKRAQYDQFG (65 aa)). A CR-type zinc finger spans residues 145–227 (GKKTDITYTR…CHGQGTVDKK (83 aa)). Cys-158, Cys-161, Cys-175, Cys-178, Cys-201, Cys-204, Cys-215, and Cys-218 together coordinate Zn(2+). CXXCXGXG motif repeat units lie at residues 158–165 (CPTCDGSG), 175–182 (CDKCHGSG), 201–208 (CDKCGGRG), and 215–222 (CQTCHGQG).

This sequence belongs to the DnaJ family. Homodimer. Requires Zn(2+) as cofactor.

It localises to the cytoplasm. In terms of biological role, participates actively in the response to hyperosmotic and heat shock by preventing the aggregation of stress-denatured proteins and by disaggregating proteins, also in an autonomous, DnaK-independent fashion. Unfolded proteins bind initially to DnaJ; upon interaction with the DnaJ-bound protein, DnaK hydrolyzes its bound ATP, resulting in the formation of a stable complex. GrpE releases ADP from DnaK; ATP binding to DnaK triggers the release of the substrate protein, thus completing the reaction cycle. Several rounds of ATP-dependent interactions between DnaJ, DnaK and GrpE are required for fully efficient folding. Also involved, together with DnaK and GrpE, in the DNA replication of plasmids through activation of initiation proteins. This is Chaperone protein DnaJ from Lactobacillus johnsonii (strain CNCM I-12250 / La1 / NCC 533).